Consider the following 153-residue polypeptide: Endoribonuclease YbeY (153 aa).

The Zn(2+) site is built by His-114, His-118, and His-124.

This sequence belongs to the endoribonuclease YbeY family. Zn(2+) serves as cofactor.

It localises to the cytoplasm. Functionally, single strand-specific metallo-endoribonuclease involved in late-stage 70S ribosome quality control and in maturation of the 3' terminus of the 16S rRNA. In Shewanella baltica (strain OS185), this protein is Endoribonuclease YbeY.